Consider the following 298-residue polypeptide: MSIPLPDVALTELSATRAPLDWVGMDGIDVPILLDEPEFAYPVHARAEVQVDLPDPAIKGIHMSRLYRLLDGFAGRDRLNPASLAVLLREMVFSHADCNSTRARLTLAFSLLCRRPALLTQGLSGWKSYPVRLEAVWEAGRLSLDATLQIGYSSTCPCSAALTRQLIEQAFVERFSAAGQVEPAAVAAWLQRNATLATPHSQRSVAEVRVRIPEGATRLGLLALIERIETCLGTPVQTAVKRADEQAFARLNGQNLMYVEDAARKIRQAVAEGFSQFSVSVRHVESLHPHDAVASSSS.

Belongs to the GTP cyclohydrolase IV family.

It catalyses the reaction GTP + H2O = 7,8-dihydroneopterin 3'-triphosphate + formate + H(+). It functions in the pathway cofactor biosynthesis; 7,8-dihydroneopterin triphosphate biosynthesis; 7,8-dihydroneopterin triphosphate from GTP: step 1/1. Its function is as follows. Converts GTP to 7,8-dihydroneopterin triphosphate. The sequence is that of GTP cyclohydrolase FolE2 from Azotobacter vinelandii (strain DJ / ATCC BAA-1303).